The primary structure comprises 380 residues: Glucose-1-phosphate adenylyltransferase (380 aa).

Residues Gly164, 179–180, and Ser190 contribute to the alpha-D-glucose 1-phosphate site; that span reads EK.

It belongs to the bacterial/plant glucose-1-phosphate adenylyltransferase family. In terms of assembly, homotetramer.

The catalysed reaction is alpha-D-glucose 1-phosphate + ATP + H(+) = ADP-alpha-D-glucose + diphosphate. The protein operates within glycan biosynthesis; glycogen biosynthesis. Functionally, involved in the biosynthesis of ADP-glucose, a building block required for the elongation reactions to produce glycogen. Catalyzes the reaction between ATP and alpha-D-glucose 1-phosphate (G1P) to produce pyrophosphate and ADP-Glc. This chain is Glucose-1-phosphate adenylyltransferase, found in Lactococcus lactis subsp. lactis (strain IL1403) (Streptococcus lactis).